The sequence spans 61 residues: Small ribosomal subunit protein uS14 (61 aa).

Zn(2+) is bound by residues C24, C27, C40, and C43.

It belongs to the universal ribosomal protein uS14 family. Zinc-binding uS14 subfamily. As to quaternary structure, part of the 30S ribosomal subunit. Contacts proteins S3 and S10. Zn(2+) is required as a cofactor.

Its function is as follows. Binds 16S rRNA, required for the assembly of 30S particles and may also be responsible for determining the conformation of the 16S rRNA at the A site. This is Small ribosomal subunit protein uS14 from Clostridium botulinum (strain Alaska E43 / Type E3).